Reading from the N-terminus, the 470-residue chain is MENLQVKALPKEFLLGTATAAYQVEGATRVDGKGINMWDVYLQENSPFLPDPASDFYYRYEEDIALAAEHGLQALRLSISWVRIFPDIDGDANVLAVHYYHRVFQSCLKHNVIPFVSLHHFDSPQKMLETGDWLNRENIDRFIRYARFCFQEFTEVKHWFTINELMSLAAGQYIGGQFPPNHHFQLSEAIQANHNMLLAHALAVLEFHQLGIEGKVGCIHALKPGYPIDGQKENILAAKRYDVYNNKFLLDGTFLGYYSEDTLFHLNQILEANNSSFIIEDGDLEIMKRAAPLNTMFGMNYYRSEFIREYKGENRQEFNSTGIKGQSSFKLNALGEFVKKPGIPTTDWDWNIYPQGLFDMLLRIKEEYPQHPVIYLTENGTALKEVKPEGENDIIDDSKRIRYIEQHLHKVLEARDRGVNIQGYFIWSLQDQFSWANGYNKRYGLFFVDYETQKRYIKKSALWVKGLKRN.

Gln23, His120, Asn163, Glu164, and Asn300 together coordinate D-galactose 6-phosphate. Glu164 acts as the Proton donor in catalysis. Residue Glu378 is the Nucleophile of the active site. Residues Ser434, Trp435, Lys441, and Tyr443 each contribute to the D-galactose 6-phosphate site.

The protein belongs to the glycosyl hydrolase 1 family.

The catalysed reaction is a 6-phospho-beta-D-galactoside + H2O = D-galactose 6-phosphate + an alcohol. The protein operates within carbohydrate metabolism; lactose degradation; D-galactose 6-phosphate and beta-D-glucose from lactose 6-phosphate: step 1/1. The polypeptide is 6-phospho-beta-galactosidase 1 (Streptococcus pneumoniae serotype 4 (strain ATCC BAA-334 / TIGR4)).